The chain runs to 291 residues: Ribosomal RNA small subunit methyltransferase H (291 aa).

Residues 31–33 (GGH), D50, F77, D98, and Q105 each bind S-adenosyl-L-methionine.

Belongs to the methyltransferase superfamily. RsmH family.

It is found in the cytoplasm. It carries out the reaction cytidine(1402) in 16S rRNA + S-adenosyl-L-methionine = N(4)-methylcytidine(1402) in 16S rRNA + S-adenosyl-L-homocysteine + H(+). Functionally, specifically methylates the N4 position of cytidine in position 1402 (C1402) of 16S rRNA. This Endomicrobium trichonymphae protein is Ribosomal RNA small subunit methyltransferase H.